The sequence spans 240 residues: MTREEAIKKIIFAMDVKEFSDVQYWAELLSQHVGMFKVGKQLYTACGPAAVRMIQKCGGEVFLDLKYHDIPNTVAMATLEAANLGVQLCDLHAMGGYEMMNKTMEALDKNFSGCTPRPKVLAITVLTSSNEETLRGIGIELPVPEMVVKLAKLAKSAGVDGVVASPQEVELIREACGKDFLVVTPGVRPSFASADDQKRIMTPAEAVKAGADYLVIGRPIAAAQSPVEAAQKIVDEIVAG.

Residues Asp15, Lys37, 64–73, Thr127, Arg188, Gln197, Gly217, and Arg218 each bind substrate; that span reads DLKYHDIPNT. Lys66 (proton donor) is an active-site residue.

This sequence belongs to the OMP decarboxylase family. Type 1 subfamily. As to quaternary structure, homodimer.

The catalysed reaction is orotidine 5'-phosphate + H(+) = UMP + CO2. It functions in the pathway pyrimidine metabolism; UMP biosynthesis via de novo pathway; UMP from orotate: step 2/2. Catalyzes the decarboxylation of orotidine 5'-monophosphate (OMP) to uridine 5'-monophosphate (UMP). This Geobacter sp. (strain M21) protein is Orotidine 5'-phosphate decarboxylase.